Here is a 913-residue protein sequence, read N- to C-terminus: Pentatricopeptide repeat-containing protein At1g10270 (913 aa).

The interval 34–138 (SLSPANEDPE…PNAPRLPDST (105 aa)) is disordered. A compositionally biased stretch (polar residues) spans 64-73 (DPSQFQIPQN). The span at 74–84 (HTPPIPYPPIP) shows a compositional bias: pro residues. The Nuclear localization signal signature appears at 99–108 (ERRRRKRRLR). Positions 108–130 (RIEPPLHALRRDPSAPPPKRDPN) are enriched in basic and acidic residues. The tract at residues 134 to 167 (LPDSTSALVGQRLNLHNRVQSLIRASDLDAASKL) is leucine-zipper. 11 PPR repeats span residues 179–214 (TVFT…NIVP), 215–250 (NVVS…PFAP), 251–285 (SSVT…GQAA), 286–316 (DSTV…LKSK), 321–355 (DGIV…KFRM), 356–390 (HPPT…HAPP), 396–426 (NSDT…VGSK), 435–469 (DYLG…SLPA), 470–504 (DAPS…NLRV), 505–539 (VADF…EPKP), and 540–574 (DPSI…NVGV). The disordered stretch occupies residues 607-913 (RNAGQSGNTP…QEKKVVELRN (307 aa)). Polar residues predominate over residues 639 to 649 (WTSQGVVHSNS). 2 stretches are compositionally biased toward low complexity: residues 650–666 (GWAN…AYKA) and 673–690 (SWSN…SNQT). Residues 674–858 (WSNTSDNQQQ…TAQQQWSNQT (185 aa)) are 14 X 11 AA approximate tandem repeats of W-x(2)-Q-x(4)-Q-x(2). Over residues 691-700 (AGQQPPSWSR) the composition is skewed to polar residues. Over residues 706-727 (QQQQSWSQQSGWSSPSGHQQSW) the composition is skewed to low complexity. The segment covering 728-761 (TNQTAGQQQPWANQTPGQQQQWANQTPGQQQQLA) has biased composition (polar residues). The span at 762–791 (NQTPGQQQQWANQTPGQQQQWANQNNGHQQ) shows a compositional bias: low complexity. A compositionally biased stretch (polar residues) spans 792-814 (PWANQNTGHQQSWANQTPSQQQP). Over residues 815-845 (WANQTTGQQQGWGNQTTGQQQQWANQTAGQQ) the composition is skewed to low complexity. 2 stretches are compositionally biased toward polar residues: residues 846 to 867 (SGWT…SQWL) and 875 to 894 (ANQT…QQEP). A compositionally biased stretch (basic and acidic residues) spans 899–913 (ECQETQEKKVVELRN).

This sequence belongs to the PPR family. P subfamily. Interacts with RPB36B through its WQQ domain. As to expression, ubiquitous but preferentially expressed in gametophytes and young embryos.

The protein resides in the nucleus. May function as a transcriptional regulator essential for early embryogenesis. The sequence is that of Pentatricopeptide repeat-containing protein At1g10270 (GRP23) from Arabidopsis thaliana (Mouse-ear cress).